A 708-amino-acid polypeptide reads, in one-letter code: Solute carrier family 15 member 1 (708 aa).

A helical membrane pass occupies residues 1–21 (MGMSKSHSFFGYPLSIFFIVV). Residues 22–53 (NEFCERFSYYGMRAILILYFTNFISWDDNLST) are Extracellular-facing. Asn-50 carries N-linked (GlcNAc...) asparagine glycosylation. The helical transmembrane segment at 54-74 (AIYHTFVALCYLTPILGALIA) threads the bilayer. The Cytoplasmic portion of the chain corresponds to 75-82 (DSWLGKFK). Residues 83–103 (TIVSLSIVYTIGQAVTSVSSI) traverse the membrane as a helical segment. The Extracellular segment spans residues 104–118 (NDLTDHNHDGTPDSL). The chain crosses the membrane as a helical span at residues 119–139 (PVHVVLSLIGLALIALGTGGI). At 140 to 161 (KPCVSAFGGDQFEEGQEKQRNR) the chain is on the cytoplasmic side. Residues 162-182 (FFSIFYLAINAGSLLSTIITP) traverse the membrane as a helical segment. At 183-198 (MLRVQQCGIHSKQACY) the chain is on the extracellular side. Residues 199 to 219 (PLAFGVPAALMAVALIVFVLG) form a helical membrane-spanning segment. Over 220-276 (SGMYKKFKPQGNIMGKVAKCIGFAIKNRFRHRSKAFPKREHWLDWAKEKYDERLISQ) the chain is Cytoplasmic. Residues 277-297 (IKMVTRVMFLYIPLPMFWALF) form a helical membrane-spanning segment. The Extracellular segment spans residues 298–327 (DQQGSRWTLQATTMSGKIGALEIQPDQMQT). A helical transmembrane segment spans residues 328-348 (VNAILIVIMVPIFDAVLYPLI). Residues 349–361 (AKCGFNFTSLKKM) are Cytoplasmic-facing. The helical transmembrane segment at 362–382 (AVGMVLASMAFVVAAIVQVEI) threads the bilayer. At 383–584 (DKTLPVFPKG…SANTVNMALQ (202 aa)) the chain is on the extracellular side. The interval 383–584 (DKTLPVFPKG…SANTVNMALQ (202 aa)) is extracellular domain (ECD). Asn-404, Asn-408, Asn-439, Asn-509, Asn-514, and Asn-562 each carry an N-linked (GlcNAc...) asparagine glycan. A helical membrane pass occupies residues 585–605 (IPQYFLLTCGEVVFSVTGLEF). The Cytoplasmic segment spans residues 606 to 619 (SYSQAPSNMKSVLQ). A helical membrane pass occupies residues 620 to 640 (AGWLLTVAVGNIIVLIVAGAG). Residues 641-645 (QFSKQ) are Extracellular-facing. The chain crosses the membrane as a helical span at residues 646 to 666 (WAEYILFAALLLVVCVIFAIM). The Cytoplasmic segment spans residues 667–708 (ARFYTYINPAEIEAQFDEDEKKNRLEKSNPYFMSGANSQKQM).

Belongs to the major facilitator superfamily. Proton-dependent oligopeptide transporter (POT/PTR) (TC 2.A.17) family. Interacts (via extracellular domain region) with trypsin. In terms of tissue distribution, expressed in small intestine.

It localises to the apical cell membrane. It carries out the reaction a dipeptide(out) + H(+)(out) = a dipeptide(in) + H(+)(in). The catalysed reaction is an L-amino acid tripeptide(out) + H(+)(out) = an L-amino acid tripeptide(in) + H(+)(in). It catalyses the reaction L-alanyl-L-lysine(out) + H(+)(out) = L-alanyl-L-lysine(in) + H(+)(in). The enzyme catalyses L-alanyl-L-proline(out) + H(+)(out) = L-alanyl-L-proline(in) + H(+)(in). It carries out the reaction L-alanyl-L-valine(out) + H(+)(out) = L-alanyl-L-valine(in) + H(+)(in). The catalysed reaction is carnosine(out) + H(+)(out) = carnosine(in) + H(+)(in). It catalyses the reaction glycyl-L-glutamine(out) + H(+)(out) = glycyl-L-glutamine(in) + H(+)(in). The enzyme catalyses glycyl-L-leucine(out) + H(+)(out) = glycyl-L-leucine(in) + H(+)(in). It carries out the reaction glycyl-L-proline(out) + H(+)(out) = glycyl-L-proline(in) + H(+)(in). The catalysed reaction is glycyl-sarcosine(out) + H(+)(out) = glycyl-sarcosine(in) + H(+)(in). It catalyses the reaction L-leucyl-L-leucine(out) + H(+)(out) = L-leucyl-L-leucine(in) + H(+)(in). The enzyme catalyses L-leucyl-L-proline(out) + H(+)(out) = L-leucyl-L-proline(in) + H(+)(in). It carries out the reaction L-phenylalanyl-L-leucine(out) + H(+)(out) = L-phenylalanyl-L-leucine(in) + H(+)(in). The catalysed reaction is L-phenylalanyl-L-phenylalanine(out) + H(+)(out) = L-phenylalanyl-L-phenylalanine(in) + H(+)(in). It catalyses the reaction L-lysyl-glycine(out) + H(+)(out) = L-lysyl-glycine(in) + H(+)(in). The enzyme catalyses L-tyrosylglycine(out) + H(+)(out) = L-tyrosylglycine(in) + H(+)(in). It carries out the reaction L-alanyl-L-aspartate(out) + 2 H(+)(out) = L-alanyl-L-aspartate(in) + 2 H(+)(in). The catalysed reaction is L-aspartyl-glycine(out) + 2 H(+)(out) = L-aspartyl-glycine(in) + 2 H(+)(in). It catalyses the reaction glycyl-L-aspartate(out) + 2 H(+)(out) = glycyl-L-aspartate(in) + 2 H(+)(in). The enzyme catalyses glycyl-L-glutamate(out) + 2 H(+)(out) = glycyl-L-glutamate(in) + 2 H(+)(in). It carries out the reaction L-alanyl-L-leucyl-L-alanine(out) + H(+)(out) = L-alanyl-L-leucyl-L-alanine(in) + H(+)(in). The catalysed reaction is L-alanyl-L-prolylglycine(out) + H(+)(out) = L-alanyl-L-prolylglycine(in) + H(+)(in). It catalyses the reaction glycylglycyl-L-isoleucine(out) + H(+)(out) = glycylglycyl-L-isoleucine(in) + H(+)(in). The enzyme catalyses glycylglycyl-L-proline(out) + H(+)(out) = glycylglycyl-L-proline(in) + H(+)(in). It carries out the reaction L-methionyl-L-phenylalanyl-L-methionine(out) + H(+)(out) = L-methionyl-L-phenylalanyl-L-methionine(in) + H(+)(in). The catalysed reaction is N-acetyl-D-muramoyl-L-alanyl-D-isoglutamine(out) + 2 H(+)(out) = N-acetyl-D-muramoyl-L-alanyl-D-isoglutamine(in) + 2 H(+)(in). It catalyses the reaction N(alpha)-formyl-L-methionyl-L-leucyl-L-phenylalanine(out) + 2 H(+)(out) = N(alpha)-formyl-L-methionyl-L-leucyl-L-phenylalanine(in) + 2 H(+)(in). Functionally, electrogenic proton-coupled amino-acid transporter that transports oligopeptides of 2 to 4 amino acids with a preference for dipeptides. Transports neutral and monovalently charged peptides with a proton to peptide stoichiometry of 1:1 or 2:1. Primarily responsible for the absorption of dietary di- and tripeptides from the small intestinal lumen. Mediates transepithelial transport of muramyl and N-formylated bacterial dipeptides contributing to recognition of pathogenic bacteria by the mucosal immune system. The polypeptide is Solute carrier family 15 member 1 (Homo sapiens (Human)).